A 323-amino-acid chain; its full sequence is MAEQNAASTTGVKPSPRTPDFSPYLDFDRAQWRELRNSMPQVLTQKEVIELRGIGENIDLAEVAEVYLPLSRLIHLQVAARQQLTAATETFLGTSPSTSVPFVIGVAGSVAVGKSTTARLLQVLLQRWNSHPRVDLVTTDGFLYPGAELTRRGLMSRKGFPESYDQRALLRFVTDVKSGKLEVNAPVYSHTAYDRVPGEFTTVRQPDILIVEGLNVLQTGPTLMVSDLFDFSVYVDARTEDIEKWYIDRFLKLRDTAFRRPGAHFSHYADMADPESIAVARELWQSINLPNLVENILPTRVRASLVLKKGSDHLVERVRMRKI.

Residues 1 to 12 (MAEQNAASTTGV) are compositionally biased toward polar residues. The segment at 1 to 24 (MAEQNAASTTGVKPSPRTPDFSPY) is disordered. 108–115 (GSVAVGKS) is a binding site for ATP.

This sequence belongs to the prokaryotic pantothenate kinase family.

Its subcellular location is the cytoplasm. The catalysed reaction is (R)-pantothenate + ATP = (R)-4'-phosphopantothenate + ADP + H(+). It functions in the pathway cofactor biosynthesis; coenzyme A biosynthesis; CoA from (R)-pantothenate: step 1/5. The chain is Pantothenate kinase from Corynebacterium glutamicum (strain R).